We begin with the raw amino-acid sequence, 638 residues long: MNAKEHFIATEAKVDEAAIAPLPNSRKIYVEGSRPDIRVPMREIRQSDTPASFGAEPNPPIFVYDCSGPYTDPAAKIDIRSGLPALRAGWIAERGDTEQLADLSSEYGRQRAADPRLDELRFPGLHRKPLRARAGANVTQMHYARRGIVTPEMEYIAIRENLRRKDYLESLLAAGPTGQKMAALLTRQHPGQNFGAAIPNEITPEFVRDEVARGRAIIPANINHPETEPMIIGRNFLVKINANIGNSALGSSIAEEVDKMTWSIRWGGDTVMDLSTGKNIHETREWIIRNSPVPIGTVPIYQALEKVDGKAEDLTWEIFRDTLIEQAEQGVDYFTIHAGVLLRYIPLTANRMTGIVSRGGSIMAKWCLAHHKESFLYTHFEDICEIMKAYDVAFSLGDGLRPGSIYDANDEAQLGELKTLGELTDIAWKHDVQVMIEGPGHVPLHMIKENMDLQLEQCKEAPFYTLGPLTTDIAPGYDHITSGIGAATIGWYGTAMLCYVTPKEHLGLPNKQDVKEGIITYKLAAHAADLAKGHPGAQIRDNALSKARFEFRWEDQFNLGLDPDKAKEFHDETLPKESAKVAHFCSMCGPHFCSMKITQDVRDFAAQQGVDEAEALQKGMEVKAVEFVKSGAEVYRNV.

Residues N243, M272, Y301, H337, 357-359 (SRG), 398-401 (DGLR), and E437 each bind substrate. H441 provides a ligand contact to Zn(2+). Y464 contributes to the substrate binding site. H505 provides a ligand contact to Zn(2+). [4Fe-4S] cluster-binding residues include C585, C588, and C593.

This sequence belongs to the ThiC family. As to quaternary structure, homodimer. [4Fe-4S] cluster serves as cofactor.

It carries out the reaction 5-amino-1-(5-phospho-beta-D-ribosyl)imidazole + S-adenosyl-L-methionine = 4-amino-2-methyl-5-(phosphooxymethyl)pyrimidine + CO + 5'-deoxyadenosine + formate + L-methionine + 3 H(+). Its pathway is cofactor biosynthesis; thiamine diphosphate biosynthesis. Functionally, catalyzes the synthesis of the hydroxymethylpyrimidine phosphate (HMP-P) moiety of thiamine from aminoimidazole ribotide (AIR) in a radical S-adenosyl-L-methionine (SAM)-dependent reaction. The sequence is that of Phosphomethylpyrimidine synthase from Azoarcus sp. (strain BH72).